A 247-amino-acid polypeptide reads, in one-letter code: Cell division protein ZapD (247 aa).

It belongs to the ZapD family. Interacts with FtsZ.

Its subcellular location is the cytoplasm. In terms of biological role, cell division factor that enhances FtsZ-ring assembly. Directly interacts with FtsZ and promotes bundling of FtsZ protofilaments, with a reduction in FtsZ GTPase activity. The polypeptide is Cell division protein ZapD (Enterobacter sp. (strain 638)).